A 437-amino-acid polypeptide reads, in one-letter code: Adenylosuccinate synthetase (437 aa).

GTP is bound by residues G12–K18 and G40–T42. D13 acts as the Proton acceptor in catalysis. Residues D13 and G40 each contribute to the Mg(2+) site. IMP-binding positions include D13–K16, N38–H41, T131, R145, Q225, and T240. H41 functions as the Proton donor in the catalytic mechanism. Residues T281 to F304 are disordered. Positions G288–E303 are enriched in basic and acidic residues. T306–R312 is a binding site for substrate. IMP is bound at residue R310. GTP is bound by residues R312, K338 to D340, and S420 to S422.

This sequence belongs to the adenylosuccinate synthetase family. Homodimer. Mg(2+) serves as cofactor.

Its subcellular location is the cytoplasm. The enzyme catalyses IMP + L-aspartate + GTP = N(6)-(1,2-dicarboxyethyl)-AMP + GDP + phosphate + 2 H(+). Its pathway is purine metabolism; AMP biosynthesis via de novo pathway; AMP from IMP: step 1/2. Plays an important role in the de novo pathway of purine nucleotide biosynthesis. Catalyzes the first committed step in the biosynthesis of AMP from IMP. The polypeptide is Adenylosuccinate synthetase (Ruegeria sp. (strain TM1040) (Silicibacter sp.)).